The primary structure comprises 570 residues: 5-aminolevulinate synthase, mitochondrial (570 aa).

Residues 1–53 constitute a mitochondrion transit peptide; that stretch reads MESVIRSSAKICPFMHSATGSMQSVKALKNANLPAIAQQCPFMGKAMEQRRGY. Substrate-binding residues include Arg119, Ser232, and Lys251. Pyridoxal 5'-phosphate contacts are provided by Ser284, His312, and Thr356. Residue Lys359 is part of the active site. An N6-(pyridoxal phosphate)lysine modification is found at Lys359. Pyridoxal 5'-phosphate-binding residues include Thr388 and Thr389. Residue Thr474 coordinates substrate.

This sequence belongs to the class-II pyridoxal-phosphate-dependent aminotransferase family. As to quaternary structure, homodimer. Pyridoxal 5'-phosphate is required as a cofactor.

The protein resides in the mitochondrion matrix. It catalyses the reaction succinyl-CoA + glycine + H(+) = 5-aminolevulinate + CO2 + CoA. It participates in porphyrin-containing compound metabolism; protoporphyrin-IX biosynthesis; 5-aminolevulinate from glycine: step 1/1. Functionally, catalyzes the synthesis of 5-aminolevulinate (ALA) from succinyl-CoA and glycine, the first and rate-limiting step in heme biosynthesis. This Kluyveromyces lactis (strain ATCC 8585 / CBS 2359 / DSM 70799 / NBRC 1267 / NRRL Y-1140 / WM37) (Yeast) protein is 5-aminolevulinate synthase, mitochondrial (HEM1).